The primary structure comprises 496 residues: Versicolorin B desaturase stcL (496 aa).

The helical transmembrane segment at 3–23 (FLSLPILTALGAVVYVLFQLV) threads the bilayer. Cys440 contributes to the heme binding site.

It belongs to the cytochrome P450 family. It depends on heme as a cofactor.

It is found in the membrane. The enzyme catalyses versicolorin B + NADPH + O2 + H(+) = versicolorin A + NADP(+) + 2 H2O. It functions in the pathway mycotoxin biosynthesis; sterigmatocystin biosynthesis. Functionally, cytochrome P450 monooxygenase; part of the gene cluster that mediates the biosynthesis of sterigmatocystin (ST), a polyketide-derived furanocoumarin which is part of the most toxic and carcinogenic compounds among the known mycotoxins. The first step in the biosynthesis of sterigmatocystin is the production of hexanoate by the fatty acid synthase (FAS) units stcJ and stcK. The polyketide backbone is assembled by the non-reducing polyketide synthase stcA by condensation of the starter hexanoyl-CoA and 7 malonyl-CoA extender units followed by cyclization and release of norsolorinic acid. Norsolorinic acid is the first stable intermediate in the biosynthesis of sterigmatocystin and is converted into averantin (AVN) by the ketoreductase stcE which reduces the hexanoate ketone to an alcohol. Averantin is then oxidized into 5'-hydroxyaverantin (HAVN) by the cytochrome P450 monooxygenase stcF. 5'-hydroxyaverantin is further converted to 5'-oxyaverantin (OAVN) by the 5'-hydroxyaverantin dehydrogenase stcG. The next step is the conversion of OAVN into averufin (AVF) which is catalyzed by a yet to be identified enzyme. The cytochrome P450 monooxygenase stcB and the flavin-binding monooxygenase stcW are both required for the conversion of averufin to 1-hydroxyversicolorone. The esterase stcI probably catalyzes the formation of versiconal hemiacetal acetate from 1-hydroxyversicolorone. The oxydoreductase stcN then probably catalyzes the biosynthetic step from versiconal to versicolorin B (VERB). The next step is performed by the versicolorin B desaturase stcL to produce versicolorin A (VERA). The ketoreductase stcU and the cytochrome P450 monooxygenase stcS are involved in the conversion of versicolorin A to demethylsterigmatocystin. The Baeyer-Villiger oxidas stcQ and the reductase stcR might be involved in the biosynthetic step from versicolorin A to demethylsterigmatocystin. The final step in the biosynthesis of sterigmatocystin is the methylation of demethylsterigmatocystin catalyzed by the methyltransferase stcP. This chain is Versicolorin B desaturase stcL, found in Emericella nidulans (strain FGSC A4 / ATCC 38163 / CBS 112.46 / NRRL 194 / M139) (Aspergillus nidulans).